A 161-amino-acid polypeptide reads, in one-letter code: Nucleotide-binding protein BceJ2315_27070 (161 aa).

Belongs to the YajQ family.

Functionally, nucleotide-binding protein. This is Nucleotide-binding protein BceJ2315_27070 from Burkholderia cenocepacia (strain ATCC BAA-245 / DSM 16553 / LMG 16656 / NCTC 13227 / J2315 / CF5610) (Burkholderia cepacia (strain J2315)).